A 96-amino-acid polypeptide reads, in one-letter code: Teretoxin Tgu6.1 (96 aa).

The N-terminal stretch at 1–16 (MRPFLVFVLIVSVSLA) is a signal peptide. Residues 17 to 52 (FSFEDMPNKGGDSVASITADQARGHKRNPLFPFAQR) constitute a propeptide that is removed on maturation.

Contains 3 disulfide bonds. Expressed by the venom duct.

It is found in the secreted. In terms of biological role, the recombinant protein causes paralysis to polychaete worms (Nereis virens), the natural prey of terebrid snails. This Terebra guttata (White spotted auger snail) protein is Teretoxin Tgu6.1.